We begin with the raw amino-acid sequence, 471 residues long: Microtubule-associated tyrosine carboxypeptidase 1 (471 aa).

Disordered regions lie at residues 1-40 (MVLD…PLYP) and 76-116 (HMRR…LRPA). Residue His280 participates in Zn(2+) binding. Glu281 functions as the Nucleophile in the catalytic mechanism. The Zn(2+) site is built by His285 and Glu316.

The protein belongs to the peptidase MATCAP family. Zn(2+) is required as a cofactor.

It is found in the cytoplasm. Its subcellular location is the cytoskeleton. It carries out the reaction C-terminal L-alpha-aminoacyl-L-glutamyl-L-glutamyl-L-tyrosyl-[tubulin] + H2O = C-terminal L-alpha-aminoacyl-L-glutamyl-L-glutamyl-[tubulin] + L-tyrosine. The catalysed reaction is C-terminal L-alpha-aminoacyl-L-glutamyl-L-glutamyl-L-phenylalanyl-[tubulin] + H2O = C-terminal L-alpha-aminoacyl-L-glutamyl-L-glutamyl-[tubulin] + L-phenylalanine. Its function is as follows. Tyrosine carboxypeptidase that removes the C-terminal tyrosine residue of alpha-tubulin, thereby regulating microtubule dynamics and function. Also able to remove the C-terminal phenylalanine residue of alpha-tubulin TUBA8. Recognizes adjacent tubulin dimers along the same protofilament. The sequence is that of Microtubule-associated tyrosine carboxypeptidase 1 from Homo sapiens (Human).